The sequence spans 1362 residues: Insulin receptor (1362 aa).

An N-terminal signal peptide occupies residues 1 to 37 (MGQGVLRGEGHPNNNPNSKVGWKSLVGIITIFMLILC). Residues 38-184 (DQSDGKICYS…DSVEDNYIEL (147 aa)) form a leucine-rich region region. A disulfide bridge links cysteine 45 with cysteine 63. Residues asparagine 53, asparagine 115, and asparagine 148 are each glycosylated (N-linked (GlcNAc...) asparagine). 14 disulfide bridges follow: cysteine 163-cysteine 192, cysteine 196-cysteine 219, cysteine 206-cysteine 225, cysteine 229-cysteine 238, cysteine 233-cysteine 244, cysteine 245-cysteine 253, cysteine 249-cysteine 262, cysteine 265-cysteine 274, cysteine 278-cysteine 290, cysteine 296-cysteine 321, cysteine 303-cysteine 311, cysteine 325-cysteine 338, cysteine 341-cysteine 345, and cysteine 349-cysteine 370. Asparagine 332 is a glycosylation site (N-linked (GlcNAc...) asparagine). N-linked (GlcNAc...) asparagine glycans are attached at residues asparagine 374, asparagine 434, and asparagine 455. Cysteines 472 and 505 form a disulfide. Fibronectin type-III domains lie at 508–629 (NLLT…TNET) and 633–730 (VPLD…IQKE). Residues asparagine 551, asparagine 627, asparagine 642, asparagine 660, and asparagine 707 are each glycosylated (N-linked (GlcNAc...) asparagine). Intrachain disulfides connect cysteine 683-cysteine 896 and cysteine 822-cysteine 830. The disordered stretch occupies residues 694 to 714 (WTPPTEIDENGNENQTEHTSV). Residues 705–714 (NENQTEHTSV) are compositionally biased toward polar residues. An insulin-binding region spans residues 741–749 (ENYLHNEVF). Residues 759–951 (DLFGVANGTL…PDHPHSNIVK (193 aa)) are Extracellular-facing. N-linked (GlcNAc...) asparagine glycosylation is found at asparagine 765 and asparagine 779. The Fibronectin type-III 3 domain maps to 849-944 (VVGPITYEYV…EQAYFQVPDH (96 aa)). N-linked (GlcNAc...) asparagine glycans are attached at residues asparagine 917 and asparagine 930. Residues 952 to 972 (IITGPIIAVFLLLIVLVYCVV) form a helical membrane-spanning segment. Topologically, residues 973 to 1362 (QKKKDAEGPA…ILSLPRSSPS (390 aa)) are cytoplasmic. Tyrosine 993 carries the post-translational modification Phosphotyrosine; by autocatalysis. A Protein kinase domain is found at 1012–1287 (INLLRELGQG…MLKDDLRPSF (276 aa)). ATP is bound by residues serine 1022, lysine 1046, and 1093 to 1099 (ELMAHGD). Aspartate 1148 functions as the Proton donor/acceptor in the catalytic mechanism. Residues 1152-1153 (RN) and aspartate 1166 each bind ATP. Phosphotyrosine; by autocatalysis occurs at positions 1174, 1178, 1179, 1335, and 1341.

This sequence belongs to the protein kinase superfamily. Tyr protein kinase family. Insulin receptor subfamily. As to quaternary structure, tetramer of 2 alpha and 2 beta chains linked by disulfide bonds. The alpha chains contribute to the formation of the ligand-binding domain, while the beta chains carry the kinase domain. Post-translationally, autophosphorylated on tyrosine residues in response to insulin. As to expression, localized mainly to the envelope in oocytes. Localized to the animal hemisphere during early embryonic cleavage. Expressed during organogenesis in regions of ecto- and mesodermic origins. Expressed in the entire encephalon, the otic and optic vesicles, the gills, the somites and the pronephric tubules of the embryo. Also found in adult liver, muscle and regenerated forelimbs.

It localises to the cell membrane. It carries out the reaction L-tyrosyl-[protein] + ATP = O-phospho-L-tyrosyl-[protein] + ADP + H(+). With respect to regulation, autophosphorylation activates the kinase activity. Receptor tyrosine kinase which mediates actions of insulin. May be required for forelimb regeneration. The sequence is that of Insulin receptor (insr) from Xenopus laevis (African clawed frog).